Reading from the N-terminus, the 963-residue chain is SH3 domain-binding protein 4 (963 aa).

In terms of domain architecture, SH3 1 spans 55–114; the sequence is GNAKEVIAIKDYCPTNFTTLKFSKGDHLYVLDTSGGEWWYAHNTTEMGYIPSSYVQPLNY. Phosphoserine occurs at positions 131, 246, 251, 279, and 296. Residues 317–454 enclose the ZU5 domain; that stretch reads TNIVCKLDSS…LEPCMYVAVV (138 aa). Position 637 is a phosphoserine (Ser-637). One can recognise an SH3 2 domain in the interval 654 to 724; sequence SSLKFGKLLK…HTKNVLVVGR (71 aa).

As to quaternary structure, homodimer or homooligomer. Interacts with DNM2, EPS15, clathrin, the adapter protein complex 2/AP-2 and TFRC. Interacts with the Rag GTPases RRAGA, RRAGB, RRAGC and RRAGD; the interaction is most probably direct, preferentially occurs with their inactive GDP-bound form and is negatively regulated by amino acids. In terms of assembly, (Microbial infection) Interacts with molluscum contagiosum virus protein MC159L; this interaction is important for the suppression of autophagy. Phosphorylated upon EGF stimulation. Phosphorylation prevents interaction with DNM2. In terms of tissue distribution, expressed in all tissues tested with higher expression in pancreas. Expressed by retinal pigment epithelial cells (at protein level).

It is found in the membrane. It localises to the clathrin-coated pit. Its subcellular location is the cytoplasmic vesicle. The protein resides in the clathrin-coated vesicle. The protein localises to the nucleus. Functionally, may function in transferrin receptor internalization at the plasma membrane through a cargo-specific control of clathrin-mediated endocytosis. Alternatively, may act as a negative regulator of the amino acid-induced TOR signaling by inhibiting the formation of active Rag GTPase complexes. Preferentially binds inactive Rag GTPase complexes and prevents their interaction with the mTORC1 complex inhibiting its relocalization to lysosomes and its activation. Thereby, may indirectly regulate cell growth, proliferation and autophagy. The protein is SH3 domain-binding protein 4 (SH3BP4) of Homo sapiens (Human).